Here is a 370-residue protein sequence, read N- to C-terminus: Ubiquitin-binding protein Rv1468c (370 aa).

The interval methionine 1 to phenylalanine 72 is UBA. One can recognise a PE domain in the interval methionine 1–threonine 93.

This sequence belongs to the mycobacterial PE family. PGRS subfamily. Interacts directly with host polyubiquitin in a UBA-dependent manner.

The protein resides in the secreted. It localises to the cell wall. The protein localises to the cell surface. Functionally, mediates direct binding of host ubiquitin (Ub) to the mycobacterial surface, which triggers host xenophagy. Interaction between Rv1468c and ubiquitin recruits autophagy receptor p62 to deliver mycobacteria into LC3-associated autophagosomes. It could be a viable evolutionary strategy adopted by M.tuberculosis to maintain long-term intracellular survival through self-controlling its intracellular bacterial loads to avoid excessive host inflammatory immune responses. The polypeptide is Ubiquitin-binding protein Rv1468c (Mycobacterium tuberculosis (strain ATCC 25618 / H37Rv)).